We begin with the raw amino-acid sequence, 194 residues long: Thymidine kinase (194 aa).

ATP-binding positions include 15 to 22 (GSMFSGKS) and 88 to 91 (DEVQ). Glu-89 serves as the catalytic Proton acceptor. Positions 145, 148, 183, and 186 each coordinate Zn(2+).

Belongs to the thymidine kinase family. In terms of assembly, homotetramer.

It is found in the cytoplasm. It catalyses the reaction thymidine + ATP = dTMP + ADP + H(+). In Bacillus anthracis (strain A0248), this protein is Thymidine kinase.